The chain runs to 392 residues: Outer membrane protein assembly factor BamB (392 aa).

Positions 1 to 19 (MQLRKLLLPGLLSVTLLSG) are cleaved as a signal peptide. Residue C20 is the site of N-palmitoyl cysteine attachment. C20 carries S-diacylglycerol cysteine lipidation.

The protein belongs to the BamB family. Part of the Bam complex, which is composed of the outer membrane protein BamA, and four lipoproteins BamB, BamC, BamD and BamE. Monomer. Interacts directly with BamA. The Bam complex has the shape of a hat, with the BamA beta-barrel crown in the outer membrane and the periplasmic brim formed by the BamA POTRA domains and the 4 lipoproteins.

It is found in the cell outer membrane. In terms of biological role, part of the outer membrane protein assembly complex (Bam), which is involved in assembly and insertion of beta-barrel proteins into the outer membrane. Nonessential member of the complex, which may orient the flexible periplasmic domain of BamA for interaction with other Bam components, chaperones and nascent outer membrane proteins. Efficient substrate folding and insertion into the outer membrane requires all 5 subunits. A lateral gate may open between the first and last strands of the BamA beta-barrel that allows substrate to insert into the outer membrane; comparison of the structures of complete and nearly complete Bam complexes show there is considerable movement of all 5 proteins. The sequence is that of Outer membrane protein assembly factor BamB from Escherichia coli (strain K12).